The primary structure comprises 1023 residues: 1-phosphatidylinositol 4,5-bisphosphate phosphodiesterase beta-4 (1023 aa).

In terms of domain architecture, PI-PLC X-box spans 149–299 (QEMDHPLAHY…LKRKILIKKQ (151 aa)). Residues His164 and His211 contribute to the active site. In terms of domain architecture, PI-PLC Y-box spans 413-529 (LSTMINYAQP…GYLLKPDFMR (117 aa)). The 126-residue stretch at 532-657 (DRTFDPFSET…SLRNEGNKPL (126 aa)) folds into the C2 domain. Disordered regions lie at residues 711–742 (ADVP…SELR) and 930–958 (KISM…VREL). Polar residues-rich tracts occupy residues 729 to 742 (AKAN…SELR) and 933 to 942 (MENSKAISQD). Thr734 is modified (phosphothreonine). The span at 943-957 (KSIKNKAERERRVRE) shows a compositional bias: basic and acidic residues.

The cofactor is Ca(2+). Post-translationally, the N-terminus is blocked. As to expression, preferentially expressed in the retina.

The protein resides in the cell membrane. The catalysed reaction is a 1,2-diacyl-sn-glycero-3-phospho-(1D-myo-inositol-4,5-bisphosphate) + H2O = 1D-myo-inositol 1,4,5-trisphosphate + a 1,2-diacyl-sn-glycerol + H(+). It carries out the reaction a 1,2-diacyl-sn-glycero-3-phospho-(1D-myo-inositol) + H2O = 1D-myo-inositol 1-phosphate + a 1,2-diacyl-sn-glycerol + H(+). Its function is as follows. Activated phosphatidylinositol-specific phospholipase C enzymes catalyze the production of the second messenger molecules diacylglycerol (DAG) and inositol 1,4,5-trisphosphate (IP3) involved in G-protein coupled receptor signaling pathways. PLCB4 is a direct effector of the endothelin receptor signaling pathway that plays an essential role in lower jaw and middle ear structures development. This Bos taurus (Bovine) protein is 1-phosphatidylinositol 4,5-bisphosphate phosphodiesterase beta-4 (PLCB4).